The chain runs to 566 residues: Lamin-1 (566 aa).

Residues 1–37 form a disordered region; sequence MSSRKGTRSSRIVTLERSANSSLSNNGGGDDSFGSTL. Serine 2 is subject to N-acetylserine. The interval 13 to 47 is head; sequence VTLERSANSSLSNNGGGDDSFGSTLLETSRLQEKD. Positions 45–387 constitute an IF rod domain; it reads EKDHLTSLNS…ALLEGEEERL (343 aa). Residues 48–82 form a coil 1A region; that stretch reads HLTSLNSRLATYIDKVRQLEQENNRLQVQIRDIEV. A linker 1 region spans residues 83-94; sequence VEKKEKSNLADR. The coil 1B stretch occupies residues 95 to 228; sequence FEAEKARLRR…AFALQQHKGE (134 aa). Positions 229–256 are linker 2; the sequence is LEEVRHKRQVDMTTYAKQINDEYQSKLQ. A coil 2 region spans residues 257-385; it reads DQIEEMRAQF…YQALLEGEEE (129 aa). The segment at 386 to 566 is tail; it reads RLNLTQEAPQ…SDPADRCSIM (181 aa). The region spanning 435–550 is the LTD domain; sequence RRSKLNKETV…DTVSSITVEF (116 aa). The interval 528–566 is disordered; the sequence is GDNPSARLEDSEGDTVSSITVEFSESSDPSDPADRCSIM. The segment covering 541-556 has biased composition (polar residues); sequence DTVSSITVEFSESSDP. Cysteine methyl ester is present on cysteine 563. Residue cysteine 563 is the site of S-farnesyl cysteine attachment. A propeptide spans 564–566 (removed in mature form); the sequence is SIM.

This sequence belongs to the intermediate filament family. As to quaternary structure, interacts with LEM domain proteins lem-2 and emr-1. May interact with unc-84; this interaction may be required to complete the connection between the nuclear lamina and the cytoskeleton. Ubiquitous. Expressed in all cells, except in cells undergoing spermatogenesis.

The protein localises to the nucleus envelope. It is found in the nucleus inner membrane. Functionally, major component of the nuclear lamina, a fibrous layer on the nucleoplasmic side of the inner nuclear membrane. Provides a framework for the nuclear envelope and probably also interacts with chromatin. Essential to maintain the shape and integrity of the nucleus, and for DNA replication. Involved in spatial organization of nuclear pore complexes. It is not a target for ced-3 during apoptosis, suggesting that lamin cleavage is not essential for apoptosis in C.elegans. The sequence is that of Lamin-1 from Caenorhabditis elegans.